The chain runs to 574 residues: E3 ubiquitin-protein ligase NEURL1 (574 aa).

Over residues 1–18 the composition is skewed to polar residues; it reads MGNNFSSVSSLQRGNPSR. Residues 1 to 53 are disordered; sequence MGNNFSSVSSLQRGNPSRASRGHPQNLKDSIGGSFPVPSHRCHHKQKHCPPTL. A lipid anchor (N-myristoyl glycine) is attached at Gly2. NHR domains follow at residues 61–217 and 292–447; these read TPLL…QLLD and GDLR…RILG. The segment at 520-560 adopts an RING-type zinc-finger fold; sequence ECTICYEHAVDTVIYTCGHMCLCYSCGLRLKKALHACCPIC.

As to quaternary structure, interacts with CPEB3 (via N-terminal domain); the interaction increases CPEB3 ubiquitination. Interacts with DLL1. In terms of processing, myristoylation is a determinant of membrane targeting. In terms of tissue distribution, expressed in CA1 pyramidal neurons (at protein level). Expressed throughout the adult forebrain, including the cerebral cortex, amygdala, striatum, and CA1 area of the hippocampus. Expressed in sensory neurons of the olfactory epithelium, the vomeronasal organ, mammary gland and skeletal muscle.

It localises to the cytoplasm. The protein localises to the perinuclear region. It is found in the cell membrane. Its subcellular location is the perikaryon. The protein resides in the cell projection. It localises to the dendrite. The protein localises to the postsynaptic density. It carries out the reaction S-ubiquitinyl-[E2 ubiquitin-conjugating enzyme]-L-cysteine + [acceptor protein]-L-lysine = [E2 ubiquitin-conjugating enzyme]-L-cysteine + N(6)-ubiquitinyl-[acceptor protein]-L-lysine.. The protein operates within protein modification; protein ubiquitination. In terms of biological role, plays a role in hippocampal-dependent synaptic plasticity, learning and memory. Involved in the formation of spines and functional synaptic contacts by modulating the translational activity of the cytoplasmic polyadenylation element-binding protein CPEB3. Promotes ubiquitination of CPEB3, and hence induces CPEB3-dependent mRNA translation activation of glutamate receptor GRIA1 and GRIA2. Can function as an E3 ubiquitin-protein ligase to activate monoubiquitination of JAG1 (in vitro), thereby regulating the Notch pathway. Acts as a tumor suppressor; inhibits malignant cell transformation of medulloblastoma (MB) cells by inhibiting the Notch signaling pathway. This is E3 ubiquitin-protein ligase NEURL1 (Neurl1) from Mus musculus (Mouse).